The chain runs to 501 residues: Aromatase 3 (501 aa).

Cys435 contributes to the heme binding site.

Belongs to the cytochrome P450 family. It depends on heme as a cofactor. As to expression, ovary.

Its subcellular location is the membrane. It catalyses the reaction testosterone + 3 reduced [NADPH--hemoprotein reductase] + 3 O2 = 17beta-estradiol + formate + 3 oxidized [NADPH--hemoprotein reductase] + 4 H2O + 4 H(+). The enzyme catalyses androst-4-ene-3,17-dione + 3 reduced [NADPH--hemoprotein reductase] + 3 O2 = estrone + formate + 3 oxidized [NADPH--hemoprotein reductase] + 4 H2O + 4 H(+). Catalyzes the formation of aromatic C18 estrogens from C19 androgens. This is Aromatase 3 (CYP19A3) from Sus scrofa (Pig).